Consider the following 217-residue polypeptide: Ribonuclease HII (217 aa).

Positions 27-216 (SQVAGVDEAG…VKESIQEGVC (190 aa)) constitute an RNase H type-2 domain. Residues aspartate 33, glutamate 34, and aspartate 126 each coordinate a divalent metal cation.

This sequence belongs to the RNase HII family. It depends on Mn(2+) as a cofactor. Mg(2+) serves as cofactor.

Its subcellular location is the cytoplasm. The enzyme catalyses Endonucleolytic cleavage to 5'-phosphomonoester.. Endonuclease that specifically degrades the RNA of RNA-DNA hybrids. This chain is Ribonuclease HII, found in Chlamydia trachomatis serovar L2 (strain ATCC VR-902B / DSM 19102 / 434/Bu).